Here is a 197-residue protein sequence, read N- to C-terminus: Nucleoid occlusion factor SlmA (197 aa).

Residues 7-67 (INRREHILQC…GLIEFIEDAI (61 aa)) form the HTH tetR-type domain. Residues 30-49 (TTAKLAAEVGVSEAALYRHF) constitute a DNA-binding region (H-T-H motif). Residues 110 to 130 (ALLGENERLRSRIDVLFAKIE) adopt a coiled-coil conformation.

The protein belongs to the nucleoid occlusion factor SlmA family. In terms of assembly, homodimer. Interacts with FtsZ.

The protein resides in the cytoplasm. It localises to the nucleoid. Functionally, required for nucleoid occlusion (NO) phenomenon, which prevents Z-ring formation and cell division over the nucleoid. Acts as a DNA-associated cell division inhibitor that binds simultaneously chromosomal DNA and FtsZ, and disrupts the assembly of FtsZ polymers. SlmA-DNA-binding sequences (SBS) are dispersed on non-Ter regions of the chromosome, preventing FtsZ polymerization at these regions. The protein is Nucleoid occlusion factor SlmA of Shewanella frigidimarina (strain NCIMB 400).